The primary structure comprises 1370 residues: DNA-directed RNA polymerase subunit beta (1370 aa).

The protein belongs to the RNA polymerase beta chain family. The RNAP catalytic core consists of 2 alpha, 1 beta, 1 beta' and 1 omega subunit. When a sigma factor is associated with the core the holoenzyme is formed, which can initiate transcription.

The catalysed reaction is RNA(n) + a ribonucleoside 5'-triphosphate = RNA(n+1) + diphosphate. Functionally, DNA-dependent RNA polymerase catalyzes the transcription of DNA into RNA using the four ribonucleoside triphosphates as substrates. This chain is DNA-directed RNA polymerase subunit beta, found in Syntrophobacter fumaroxidans (strain DSM 10017 / MPOB).